Here is a 256-residue protein sequence, read N- to C-terminus: Small ribosomal subunit protein eS1 (256 aa).

Position 2 is an N-acetylalanine; partial (Ala-2).

This sequence belongs to the eukaryotic ribosomal protein eS1 family. Component of the small ribosomal subunit. Mature ribosomes consist of a small (40S) and a large (60S) subunit. The 40S subunit contains about 33 different proteins and 1 molecule of RNA (18S). The 60S subunit contains about 49 different proteins and 3 molecules of RNA (25S, 5.8S and 5S).

It localises to the cytoplasm. This chain is Small ribosomal subunit protein eS1, found in Coprinopsis cinerea (strain Okayama-7 / 130 / ATCC MYA-4618 / FGSC 9003) (Inky cap fungus).